The following is a 160-amino-acid chain: Phosphopantetheine adenylyltransferase (160 aa).

Residue threonine 9 coordinates substrate. Residues 9–10 and histidine 17 contribute to the ATP site; that span reads TF. Lysine 41, leucine 73, and arginine 87 together coordinate substrate. ATP is bound by residues 88–90, glutamate 98, and 123–129; these read GLR and YMFISAS.

The protein belongs to the bacterial CoaD family. As to quaternary structure, homohexamer. Mg(2+) serves as cofactor.

It is found in the cytoplasm. It carries out the reaction (R)-4'-phosphopantetheine + ATP + H(+) = 3'-dephospho-CoA + diphosphate. It participates in cofactor biosynthesis; coenzyme A biosynthesis; CoA from (R)-pantothenate: step 4/5. In terms of biological role, reversibly transfers an adenylyl group from ATP to 4'-phosphopantetheine, yielding dephospho-CoA (dPCoA) and pyrophosphate. The chain is Phosphopantetheine adenylyltransferase from Thiobacillus denitrificans (strain ATCC 25259 / T1).